A 699-amino-acid polypeptide reads, in one-letter code: Triacylglycerol hydrolase DDHD2 (699 aa).

The span at Met1 to Leu11 shows a compositional bias: polar residues. The disordered stretch occupies residues Met1–Ser25. The segment covering Ser12–Ser25 has biased composition (low complexity). One can recognise a WWE domain in the interval Asp30 to Arg112. The active-site Nucleophile is Ser351. The region spanning Asp383–Lys445 is the SAM domain. Ser447 bears the Phosphoserine mark. The region spanning Leu484–Gln688 is the DDHD domain. The segment at Gln599–Pro635 is disordered. Positions Thr603 to Ser613 are enriched in acidic residues.

This sequence belongs to the PA-PLA1 family. As to quaternary structure, forms homooligomers and, to a much smaller extent, heterooligomers with DDHD1.

The protein resides in the cytoplasm. Its subcellular location is the cytosol. The protein localises to the endoplasmic reticulum-Golgi intermediate compartment. It localises to the golgi apparatus. It is found in the cis-Golgi network. It catalyses the reaction a triacylglycerol + H2O = a diacylglycerol + a fatty acid + H(+). It carries out the reaction a diacylglycerol + H2O = a monoacylglycerol + a fatty acid + H(+). The catalysed reaction is a 1,3-diacylglycerol + H2O = a 1-acylglycerol + a fatty acid + H(+). The enzyme catalyses a 1-acylglycerol + H2O = glycerol + a fatty acid + H(+). It catalyses the reaction 1,2,3-tri-(9Z-octadecenoyl)-glycerol + H2O = di-(9Z)-octadecenoylglycerol + (9Z)-octadecenoate + H(+). It carries out the reaction di-(9Z)-octadecenoylglycerol + H2O = (9Z-octadecenoyl)-glycerol + (9Z)-octadecenoate + H(+). The catalysed reaction is 1,3-di-(9Z-octadecenoyl)-glycerol + H2O = 1-(9Z-octadecenoyl)-glycerol + (9Z)-octadecenoate + H(+). The enzyme catalyses trihexadecanoylglycerol + H2O = dihexadecanoylglycerol + hexadecanoate + H(+). It catalyses the reaction 1,2-di-(9Z-octadecenoyl)-sn-glycero-3-phosphocholine + H2O = (9Z-octadecenoyl)-sn-glycero-3-phosphocholine + (9Z)-octadecenoate + H(+). It carries out the reaction 1-(9Z-octadecenoyl)-glycerol + H2O = glycerol + (9Z)-octadecenoate + H(+). The catalysed reaction is 1,2-di-(9Z-octadecenoyl)-sn-glycero-3-phosphate + H2O = 2-(9Z-octadecenoyl)-sn-glycero-3-phosphate + (9Z)-octadecenoate + H(+). The enzyme catalyses 1-hexadecanoyl-2-(9Z-octadecenoyl)-sn-glycero-3-phosphate + H2O = 2-(9Z-octadecenoyl)-sn-glycero-3-phosphate + hexadecanoate + H(+). It catalyses the reaction 1-hexadecanoyl-2-(9Z-octadecenoyl)-sn-glycero-3-phosphoethanolamine + H2O = 2-(9Z-octadecenoyl)-sn-glycero-3-phosphoethanolamine + hexadecanoate + H(+). It carries out the reaction 1-hexadecanoyl-2-(9Z-octadecenoyl)-sn-glycero-3-phospho-L-serine + H2O = 2-(9Z-octadecenoyl)-sn-glycero-3-phospho-L-serine + hexadecanoate + H(+). The catalysed reaction is 1-hexadecanoyl-2-(9Z-octadecenoyl)-sn-glycero-3-phosphocholine + H2O = 2-(9Z-octadecenoyl)-sn-glycero-3-phosphocholine + hexadecanoate + H(+). Its function is as follows. Diacylglycerol (DAG) and triacylglycerol (TAG) lipase that is required for proper lipid homeostasis in the central nervous system. It cooperates with PNPLA2/ATGL in neuronal TAG catabolism and hydrolyzes sn-1,3-DAG downstream of PNPLA2/ATGL. In vitro, also acts as a phospholipase that hydrolyzes preferentially phosphatidic acids, including 1,2-dioleoyl-sn-phosphatidic acid, phosphatidylcholine and phosphatidylethanolamine. Specifically binds to phosphatidylinositol 3-phosphate (PI(3)P), phosphatidylinositol 4-phosphate (PI(4)P), phosphatidylinositol 5-phosphate (PI(5)P) and possibly phosphatidylinositol 4,5-bisphosphate (PI(4,5)P2). May be involved in the maintenance of the endoplasmic reticulum and/or Golgi structures. May regulate the transport between Golgi apparatus and plasma membrane. The protein is Triacylglycerol hydrolase DDHD2 of Mus musculus (Mouse).